Here is a 1210-residue protein sequence, read N- to C-terminus: Inner capsid protein VP3 (1210 aa).

A disordered region spans residues Met-1–Thr-28. The C2H2-type zinc finger occupies Leu-113 to His-136. The tract at residues Pro-294–Pro-319 is disordered. The span at Gln-299 to Ser-315 shows a compositional bias: low complexity.

Belongs to the turreted BTV-fold inner capsid family. In terms of assembly, homodecamer; each decamer is made up of two conformers of VP2, called VP2A and VP2B. 12 homodecamers assemble to form an icosahedral capsid. Interacts with VP6.

Its subcellular location is the virion. Functionally, inner capsid protein that self-assembles to form an icosahedral capsid with a T=2 symmetry, which consists of 120 copies of VP2, with channels at each of its five-fold vertices. This capsid constitutes the innermost concentric layer of the viral mature particle. This is Inner capsid protein VP3 (S3) from Aquareovirus A (isolate Chum salmon/Japan/CSRV/1981) (AQRV-A).